Consider the following 240-residue polypeptide: Putative truncated effector protein hopW1-2 (240 aa).

The segment at 1 to 32 is disordered; that stretch reads MSPAQIIRTSHSFPPSFTGTSSSAENSHAQSP. Residues 9 to 23 show a composition bias toward low complexity; the sequence is TSHSFPPSFTGTSSS.

It belongs to the HopW family.

This chain is Putative truncated effector protein hopW1-2 (hopW1-2), found in Pseudomonas syringae pv. maculicola.